Consider the following 369-residue polypeptide: Flagellar P-ring protein (369 aa).

Residues 1 to 24 (MKTLHRCIGVALLALGALAGTAHA) form the signal peptide.

The protein belongs to the FlgI family. The basal body constitutes a major portion of the flagellar organelle and consists of four rings (L,P,S, and M) mounted on a central rod.

It localises to the periplasm. The protein localises to the bacterial flagellum basal body. Its function is as follows. Assembles around the rod to form the L-ring and probably protects the motor/basal body from shearing forces during rotation. The polypeptide is Flagellar P-ring protein (Ralstonia nicotianae (strain ATCC BAA-1114 / GMI1000) (Ralstonia solanacearum)).